A 432-amino-acid polypeptide reads, in one-letter code: Glutamate-1-semialdehyde 2,1-aminomutase (432 aa).

An N6-(pyridoxal phosphate)lysine modification is found at lysine 265.

It belongs to the class-III pyridoxal-phosphate-dependent aminotransferase family. HemL subfamily. Homodimer. It depends on pyridoxal 5'-phosphate as a cofactor.

Its subcellular location is the cytoplasm. It catalyses the reaction (S)-4-amino-5-oxopentanoate = 5-aminolevulinate. It functions in the pathway porphyrin-containing compound metabolism; protoporphyrin-IX biosynthesis; 5-aminolevulinate from L-glutamyl-tRNA(Glu): step 2/2. This Histophilus somni (strain 2336) (Haemophilus somnus) protein is Glutamate-1-semialdehyde 2,1-aminomutase.